The primary structure comprises 185 residues: Probable DNA-directed RNA polymerase subunit delta (185 aa).

Residues 14-81 enclose the HTH HARE-type domain; sequence LSMIEVAHAI…GDNTWGLRAW (68 aa). The tract at residues 90–185 is disordered; it reads ATVGENEEDE…DEEDEDEDDE (96 aa). Acidic residues-rich tracts occupy residues 117 to 167 and 175 to 185; these read DTDD…DDGI and HDEEDEDEDDE.

Belongs to the RpoE family. In terms of assembly, RNAP is composed of a core of 2 alpha, a beta and a beta' subunits. The core is associated with a delta subunit and one of several sigma factors.

Functionally, participates in both the initiation and recycling phases of transcription. In the presence of the delta subunit, RNAP displays an increased specificity of transcription, a decreased affinity for nucleic acids, and an increased efficiency of RNA synthesis because of enhanced recycling. The chain is Probable DNA-directed RNA polymerase subunit delta from Limosilactobacillus reuteri (strain DSM 20016) (Lactobacillus reuteri).